The following is a 330-amino-acid chain: Ketol-acid reductoisomerase (NADP(+)) (330 aa).

Residues 2 to 182 enclose the KARI N-terminal Rossmann domain; the sequence is ARMYYDADAN…GGTRAGILET (181 aa). NADP(+) is bound by residues 25 to 28, Ser51, Ser53, and 83 to 86; these read YGSQ and DEFQ. His108 is an active-site residue. Position 134 (Gly134) interacts with NADP(+). Positions 183-328 constitute a KARI C-terminal knotted domain; it reads SFREETETDL…KDLRAMFSWL (146 aa). Mg(2+)-binding residues include Asp191, Glu195, Glu227, and Glu231. Residue Ser252 participates in substrate binding.

This sequence belongs to the ketol-acid reductoisomerase family. Mg(2+) serves as cofactor.

It catalyses the reaction (2R)-2,3-dihydroxy-3-methylbutanoate + NADP(+) = (2S)-2-acetolactate + NADPH + H(+). It carries out the reaction (2R,3R)-2,3-dihydroxy-3-methylpentanoate + NADP(+) = (S)-2-ethyl-2-hydroxy-3-oxobutanoate + NADPH + H(+). It participates in amino-acid biosynthesis; L-isoleucine biosynthesis; L-isoleucine from 2-oxobutanoate: step 2/4. It functions in the pathway amino-acid biosynthesis; L-valine biosynthesis; L-valine from pyruvate: step 2/4. Involved in the biosynthesis of branched-chain amino acids (BCAA). Catalyzes an alkyl-migration followed by a ketol-acid reduction of (S)-2-acetolactate (S2AL) to yield (R)-2,3-dihydroxy-isovalerate. In the isomerase reaction, S2AL is rearranged via a Mg-dependent methyl migration to produce 3-hydroxy-3-methyl-2-ketobutyrate (HMKB). In the reductase reaction, this 2-ketoacid undergoes a metal-dependent reduction by NADPH to yield (R)-2,3-dihydroxy-isovalerate. This Synechococcus sp. (strain ATCC 27144 / PCC 6301 / SAUG 1402/1) (Anacystis nidulans) protein is Ketol-acid reductoisomerase (NADP(+)).